We begin with the raw amino-acid sequence, 509 residues long: Scavenger receptor class B member 1 (509 aa).

The Cytoplasmic segment spans residues 1-11 (MGSRSRARQVA). A helical transmembrane segment spans residues 12 to 32 (AALGFVGLLLAALGAVMIVMV). At 33 to 439 (PSIIKQQVLK…FYTQLVLMPK (407 aa)) the chain is on the extracellular side. 8 N-linked (GlcNAc...) asparagine glycosylation sites follow: N102, N108, N173, N212, N255, N310, N330, and N383. C251 and C384 are joined by a disulfide. Residues 440 to 460 (VLHYAQYVLLALGCVLLFIPI) traverse the membrane as a helical segment. Over 461–509 (VYQIRSQEKCYLFWSSSKKGSKDKEAIQAYSESLMTPAPKGTVLQEARL) the chain is Cytoplasmic.

This sequence belongs to the CD36 family. As to quaternary structure, the C-terminal region binds to PDZK1. In terms of processing, N-glycosylated. The six cysteines of the extracellular domain are all involved in intramolecular disulfide bonds.

The protein localises to the cell membrane. It localises to the membrane. It is found in the caveola. Its function is as follows. Receptor for different ligands such as phospholipids, cholesterol ester, lipoproteins, phosphatidylserine and apoptotic cells. Receptor for HDL, mediating selective uptake of cholesteryl ether and HDL-dependent cholesterol efflux. Also facilitates the flux of free and esterified cholesterol between the cell surface and apoB-containing lipoproteins and modified lipoproteins, although less efficiently than HDL. May be involved in the phagocytosis of apoptotic cells, via its phosphatidylserine binding activity. This chain is Scavenger receptor class B member 1 (SCARB1), found in Sus scrofa (Pig).